We begin with the raw amino-acid sequence, 260 residues long: Neuraminyllactose-binding hemagglutinin (260 aa).

A signal peptide spans 1-27 (MKANNHFKDFAWKKCLLGASVVALLVG). Cys-28 is lipidated: N-palmitoyl cysteine. The S-diacylglycerol cysteine moiety is linked to residue Cys-28.

Its subcellular location is the cell outer membrane. This Helicobacter pylori (strain ATCC 700392 / 26695) (Campylobacter pylori) protein is Neuraminyllactose-binding hemagglutinin (hpaA).